A 329-amino-acid chain; its full sequence is Flotillin-like protein FloA (329 aa).

A run of 2 helical transmembrane segments spans residues 4–24 (IGFI…FSFV) and 26–46 (VGLW…TLVG).

The protein belongs to the flotillin-like FloA family. In terms of assembly, homooligomerizes.

Its subcellular location is the cell membrane. It is found in the membrane raft. Its function is as follows. Found in functional membrane microdomains (FMM) that may be equivalent to eukaryotic membrane rafts. FMMs are highly dynamic and increase in number as cells age. Flotillins are thought to be important factors in membrane fluidity. The chain is Flotillin-like protein FloA from Staphylococcus epidermidis (strain ATCC 35984 / DSM 28319 / BCRC 17069 / CCUG 31568 / BM 3577 / RP62A).